The following is an 83-amino-acid chain: Transmembrane protein EP84R (83 aa).

The next 2 membrane-spanning stretches (helical) occupy residues 31–51 and 59–79; these read IIGV…IIIL and AGSI…FLIY.

Belongs to the asfivirus EP84R family.

The protein localises to the virion membrane. The polypeptide is Transmembrane protein EP84R (Ornithodoros (relapsing fever ticks)).